The following is a 470-amino-acid chain: Cholesterol 7-desaturase nvd 1 (470 aa).

A helical membrane pass occupies residues 67–87 (LALCIAGFSVLMYFLYVLVFV). Residues 136–238 (FRLVDSQQLE…CREVNKAIFV (103 aa)) form the Rieske domain. The [2Fe-2S] cluster site is built by cysteine 176, histidine 178, cysteine 196, and histidine 199.

The protein belongs to the cholesterol 7-desaturase family. The cofactor is [2Fe-2S] cluster.

The protein resides in the membrane. It carries out the reaction cholesterol + NADPH + O2 + H(+) = 7-dehydrocholesterol + NADP(+) + 2 H2O. The catalysed reaction is cholesterol + NADH + O2 + H(+) = 7-dehydrocholesterol + NAD(+) + 2 H2O. Its pathway is steroid hormone biosynthesis; dafachronic acid biosynthesis. In terms of biological role, catalyzes the production of 7-dehydrocholesterol (7-DHC or cholesta-5,7-dien-3beta-ol) by inserting a double bond (desaturating) at the C7-C8 single bond of cholesterol. Essential regulator of steroid biosynthesis as this reaction is the first step in the synthesis of the steroid hormone Delta(7)-dafachronic acid. This Ciona intestinalis (Transparent sea squirt) protein is Cholesterol 7-desaturase nvd 1.